The following is a 108-amino-acid chain: Abscisic stress-ripening protein 3 (108 aa).

Disordered regions lie at residues 1 to 34 (MAEE…HHSH) and 84 to 108 (FAFH…GRHH). Over residues 15–24 (NREEEGGPVD) the composition is skewed to basic and acidic residues. Residues 25–34 (HKKKVKHHSH) show a composition bias toward basic residues. Residues 95-108 (AKKEKKAAEKGRHH) are compositionally biased toward basic and acidic residues.

The protein belongs to the abscisic acid and water stress-induced protein family.

This Solanum lycopersicum (Tomato) protein is Abscisic stress-ripening protein 3.